The primary structure comprises 402 residues: Formate-dependent phosphoribosylglycinamide formyltransferase (402 aa).

Residues E22–L23 and E82 each bind N(1)-(5-phospho-beta-D-ribosyl)glycinamide. ATP contacts are provided by residues R115, K160, S165 to Q170, E200 to V203, and E208. An ATP-grasp domain is found at R120–L318. Mg(2+) is bound by residues E277 and E289. Residues D296, K365, and R372 to R373 each bind N(1)-(5-phospho-beta-D-ribosyl)glycinamide.

It belongs to the PurK/PurT family. In terms of assembly, homodimer.

The catalysed reaction is N(1)-(5-phospho-beta-D-ribosyl)glycinamide + formate + ATP = N(2)-formyl-N(1)-(5-phospho-beta-D-ribosyl)glycinamide + ADP + phosphate + H(+). Its pathway is purine metabolism; IMP biosynthesis via de novo pathway; N(2)-formyl-N(1)-(5-phospho-D-ribosyl)glycinamide from N(1)-(5-phospho-D-ribosyl)glycinamide (formate route): step 1/1. Involved in the de novo purine biosynthesis. Catalyzes the transfer of formate to 5-phospho-ribosyl-glycinamide (GAR), producing 5-phospho-ribosyl-N-formylglycinamide (FGAR). Formate is provided by PurU via hydrolysis of 10-formyl-tetrahydrofolate. This Mycobacteroides abscessus (strain ATCC 19977 / DSM 44196 / CCUG 20993 / CIP 104536 / JCM 13569 / NCTC 13031 / TMC 1543 / L948) (Mycobacterium abscessus) protein is Formate-dependent phosphoribosylglycinamide formyltransferase.